The primary structure comprises 103 residues: MYAVVKTGGKQYRVAAGEKLKVEQIPADIGQEITLDQVLSVGEGDQLKVGTPLVAGAVVKATVLAHGRHDKVKIFKMRRRKHYQKRQGHRQNYTEIRIEAITA.

Belongs to the bacterial ribosomal protein bL21 family. In terms of assembly, part of the 50S ribosomal subunit. Contacts protein L20.

Functionally, this protein binds to 23S rRNA in the presence of protein L20. The polypeptide is Large ribosomal subunit protein bL21 (Bordetella avium (strain 197N)).